A 219-amino-acid polypeptide reads, in one-letter code: tRNA (guanine-N(7)-)-methyltransferase (219 aa).

Residues Glu-46, Glu-71, Asn-100, and Asp-122 each contribute to the S-adenosyl-L-methionine site. Asp-122 is a catalytic residue. Substrate-binding positions include Lys-126, Asp-158, and 199–202; that span reads TEYE.

Belongs to the class I-like SAM-binding methyltransferase superfamily. TrmB family.

It catalyses the reaction guanosine(46) in tRNA + S-adenosyl-L-methionine = N(7)-methylguanosine(46) in tRNA + S-adenosyl-L-homocysteine. It participates in tRNA modification; N(7)-methylguanine-tRNA biosynthesis. Functionally, catalyzes the formation of N(7)-methylguanine at position 46 (m7G46) in tRNA. This chain is tRNA (guanine-N(7)-)-methyltransferase, found in Leuconostoc citreum (strain KM20).